The sequence spans 452 residues: MENHRSVFSNVIGDIVEKPPKQLVEVKRSVQRHARGFPAVSRTLPKRESKSMSAYKEKMLRKNKESPGLEGKGNLDDQGIDEENRVRLERMNDLEIEGAQEEIRATIRDDLLEMLKKRAFKKKAERELAQRKDRSSQVNTPDLSQRPSDDSFLSNEKLRSSEKLNRNLQSVLSSEAVDSSSGSPSPPMALSQAEIRSRQTKRVMFPDKAEELTKIFSLPTLAPIKGNEEDDASEDAKHSPKKHSPALSDGTTSNDGAPLEFDTTHLPEKQVTLDPNDPSFYEQLHDKYFPNLPVDEKQMQWLHDPSPAENSYHPSVESLHAHEIRFGFKGEIITPSQSQTIPVNEGLHHHGDAPFSAGYTLVELAHLLRSSFPTQRCIAIQTIGRIIYRLNSGEFREVLSPELHTLVEDAHIYELLAAAASDQVKHLTVRSLAIEALWLCSQSQHGSSRSAV.

3 disordered regions span residues 60 to 83, 125 to 202, and 223 to 261; these read LRKN…IDEE, EREL…QTKR, and PIKG…PLEF. Basic and acidic residues predominate over residues 125-135; sequence ERELAQRKDRS. A compositionally biased stretch (polar residues) spans 136–154; the sequence is SQVNTPDLSQRPSDDSFLS. A compositionally biased stretch (basic and acidic residues) spans 156-165; the sequence is EKLRSSEKLN. Residues 170 to 191 are compositionally biased toward low complexity; that stretch reads SVLSSEAVDSSSGSPSPPMALS.

Belongs to the RPAP1 family. As to quaternary structure, interacts with RNA polymerase II.

Its subcellular location is the cytoplasm. It localises to the nucleus. Forms an interface between the RNA polymerase II enzyme and chaperone/scaffolding proteins, suggesting that it is required to connect RNA polymerase II to regulators of protein complex formation. The chain is RNA polymerase II-associated protein rba50 (rba50) from Schizosaccharomyces pombe (strain 972 / ATCC 24843) (Fission yeast).